The following is a 496-amino-acid chain: MEKSQGYLELDKSWRHDFLYPLIFQEYIYALAHEQGLNRSILLENTDHDNKYSSLIVKRLITLIHQQNHFLIFDNDSNQNPFWKHNNNLYSQTISEGFVIIVEIPFSPRFVDSLEEKKKILKSNNLRSIHSIFPFLEDQILHLNFVANILIPYPIHLEIVVQSLRYRVKDASSLHLLRFFLFTLNKSISSFSKRNQRFFLFLYNSHVYEYESTFLFLRNKTSHLRSTSSGAFLERIFFYGKIKHLIEVFANDFQAILWLFKDPFMHYVRYQGKSILASKRTSLRMNKWKYYLVNFWQCQFYVWSQPGRVSINQLSNHSLDFLGYLSSVRRNPLAVRSQMLENSFLTDNAIKKFDIIVLLISLIGSLAKAKFCNVLGHPLSKPARADSSDSDIIERFVRICRNLSHYHSGSSKKKSLYRIKYILRLSCARTLARKHKTTVRSFLKRLGSELLEEFLTEDGQVISLIFPRTSSTSWRLYRGGIWYLDITCINDLANHE.

This sequence belongs to the intron maturase 2 family. MatK subfamily.

It is found in the plastid. Its subcellular location is the chloroplast. Its function is as follows. Usually encoded in the trnK tRNA gene intron. Probably assists in splicing its own and other chloroplast group II introns. This Paeonia peregrina (Common peony) protein is Maturase K.